The following is a 922-amino-acid chain: Translation initiation factor IF-2 (922 aa).

Residues 243 to 329 (AAREAAKLAE…GKSKSGQEET (87 aa)) form a disordered region. The span at 250–264 (LAEAQKAAAPAPAAP) shows a compositional bias: low complexity. The segment covering 267–298 (KTLHKPDKPAAAKGAKGPDKKPAGAWKDDAAR) has biased composition (basic and acidic residues). Residues 422 to 589 (ARPPVVTVMG…AILLQAEVLE (168 aa)) form the tr-type G domain. Residues 431–438 (GHVDHGKT) form a G1 region. 431–438 (GHVDHGKT) is a GTP binding site. The G2 stretch occupies residues 456 to 460 (GITQH). A G3 region spans residues 477 to 480 (DTPG). GTP is bound by residues 477–481 (DTPGH) and 531–534 (NKID). The tract at residues 531–534 (NKID) is G4. The tract at residues 567 to 569 (SAK) is G5.

The protein belongs to the TRAFAC class translation factor GTPase superfamily. Classic translation factor GTPase family. IF-2 subfamily.

The protein resides in the cytoplasm. Its function is as follows. One of the essential components for the initiation of protein synthesis. Protects formylmethionyl-tRNA from spontaneous hydrolysis and promotes its binding to the 30S ribosomal subunits. Also involved in the hydrolysis of GTP during the formation of the 70S ribosomal complex. This chain is Translation initiation factor IF-2, found in Thiobacillus denitrificans (strain ATCC 25259 / T1).